The sequence spans 101 residues: Biogenesis of lysosome-related organelles complex 1 subunit BLS1 (101 aa).

It belongs to the BLOC1S1 family. As to quaternary structure, component of the biogenesis of lysosome-related organelles complex-1 (BLOC-1).

The protein resides in the endosome. Its function is as follows. Component of the biogenesis of lysosome-related organelles complex-1 (BLOC-1), a complex involved in endosomal cargo sorting. The sequence is that of Biogenesis of lysosome-related organelles complex 1 subunit BLS1 (BLS1) from Zygosaccharomyces rouxii (strain ATCC 2623 / CBS 732 / NBRC 1130 / NCYC 568 / NRRL Y-229).